The following is a 178-amino-acid chain: ATP synthase subunit b, chloroplastic (178 aa).

Residues 26–46 (TNLINIIILLIILFYFLKGLL) traverse the membrane as a helical segment.

The protein belongs to the ATPase B chain family. In terms of assembly, F-type ATPases have 2 components, F(1) - the catalytic core - and F(0) - the membrane proton channel. F(1) has five subunits: alpha(3), beta(3), gamma(1), delta(1), epsilon(1). F(0) has four main subunits: a(1), b(1), b'(1) and c(10-14). The alpha and beta chains form an alternating ring which encloses part of the gamma chain. F(1) is attached to F(0) by a central stalk formed by the gamma and epsilon chains, while a peripheral stalk is formed by the delta, b and b' chains.

The protein localises to the plastid. It localises to the chloroplast thylakoid membrane. Its function is as follows. F(1)F(0) ATP synthase produces ATP from ADP in the presence of a proton or sodium gradient. F-type ATPases consist of two structural domains, F(1) containing the extramembraneous catalytic core and F(0) containing the membrane proton channel, linked together by a central stalk and a peripheral stalk. During catalysis, ATP synthesis in the catalytic domain of F(1) is coupled via a rotary mechanism of the central stalk subunits to proton translocation. Functionally, component of the F(0) channel, it forms part of the peripheral stalk, linking F(1) to F(0). The chain is ATP synthase subunit b, chloroplastic from Vaucheria litorea (Yellow-green alga).